We begin with the raw amino-acid sequence, 443 residues long: Probable glycine dehydrogenase (decarboxylating) subunit 1 (443 aa).

The protein belongs to the GcvP family. N-terminal subunit subfamily. The glycine cleavage system is composed of four proteins: P, T, L and H. In this organism, the P 'protein' is a heterodimer of two subunits.

The enzyme catalyses N(6)-[(R)-lipoyl]-L-lysyl-[glycine-cleavage complex H protein] + glycine + H(+) = N(6)-[(R)-S(8)-aminomethyldihydrolipoyl]-L-lysyl-[glycine-cleavage complex H protein] + CO2. The glycine cleavage system catalyzes the degradation of glycine. The P protein binds the alpha-amino group of glycine through its pyridoxal phosphate cofactor; CO(2) is released and the remaining methylamine moiety is then transferred to the lipoamide cofactor of the H protein. This Maridesulfovibrio salexigens (strain ATCC 14822 / DSM 2638 / NCIMB 8403 / VKM B-1763) (Desulfovibrio salexigens) protein is Probable glycine dehydrogenase (decarboxylating) subunit 1.